The chain runs to 1175 residues: Atrophin-1 (1175 aa).

3 disordered regions span residues 1–595 (MKTR…VTTS), 608–752 (SSPA…ARFN), and 770–847 (VPLE…HRPP). Residues 16–32 (RKKEAPGPREELRSRGR) carry the Nuclear localization signal motif. Over residues 17 to 29 (KKEAPGPREELRS) the composition is skewed to basic and acidic residues. Ser-34 bears the Phosphoserine mark. Residues 45 to 63 (GKAEKSRQTAKKARIEEPS) show a composition bias toward basic and acidic residues. A phosphoserine mark is found at Ser-77, Ser-79, Ser-101, Ser-103, and Ser-107. Over residues 108 to 128 (LDGRSINDDGSSDPRDIDQDN) the composition is skewed to basic and acidic residues. The span at 129 to 152 (RSTSPSIYSPGSVENDSDSSSGLS) shows a compositional bias: polar residues. Composition is skewed to pro residues over residues 158-174 (PYHPPPLFPPSPPPPDS) and 208-217 (GPPPGAPPTH). Composition is skewed to low complexity over residues 240–253 (GAAASSVGAPSGGK) and 262–273 (IPISSSGASGAP). Residues 345–374 (PPGPEKGPTLAPSPHPLPPASSSAPGPPMR) are compositionally biased toward pro residues. The span at 378 to 396 (SSSSSSAAASSSSSSSSAS) shows a compositional bias: low complexity. The span at 416-437 (SMSVSNQPPKYTQPSLPSQAVW) shows a compositional bias: polar residues. Over residues 476–491 (THHHHQQQPQQQHHHG) the composition is skewed to basic residues. The interval 503-553 (HPLESSNSHHAHPYNMSPSLGSLRPYPPGPAHLPPPHGQVSYNQAGPNGPP) is involved in binding BAIAP2. The span at 527–539 (PYPPGPAHLPPPH) shows a compositional bias: pro residues. Residues 547–584 (AGPNGPPVSSSNSSGSSSQASYSCSHPSSSQGPQGASY) show a composition bias toward low complexity. Position 617 is a phosphoserine (Ser-617). Lys-626 carries the N6-acetyllysine modification. Thr-638 bears the Phosphothreonine mark. Ser-646 carries the post-translational modification Phosphoserine. The residue at position 654 (Thr-654) is a Phosphothreonine. Composition is skewed to pro residues over residues 693–703 (LPPPPAAPTTG) and 722–737 (PESPVPPARSPSPPPK). Ser-724 is modified (phosphoserine; by MAPK8). Phosphoserine occurs at positions 731 and 733. A compositionally biased stretch (basic and acidic residues) spans 780–824 (KRADLVEKVRREAEQRAREEKEREREREREKEREREKERELERSV). Residues 864 to 879 (DTPALRTLSEYARPHV) form a required for interaction with FAT1 region. Ser-881 carries the post-translational modification Phosphoserine. The tract at residues 913 to 932 (PAAREREREARERDLRDRLK) is disordered. The segment covering 914–932 (AAREREREARERDLRDRLK) has biased composition (basic and acidic residues). Positions 1018–1026 (ALGNDPLAR) match the Nuclear export signal motif. Arg-1100 is subject to Asymmetric dimethylarginine. Lys-1168 participates in a covalent cross-link: Glycyl lysine isopeptide (Lys-Gly) (interchain with G-Cter in SUMO2).

As to quaternary structure, interacts with BAIAP2, WWP1, WWP2, WWP3 and RERE. Interacts (via its N-terminus) with MTG8; the interaction enhances transcriptional repression of MTG8. Interacts with PQBP1. Interacts with NR2E1; the interaction represses the transcriptional activity of NR2E1. Interacts with FAT1 (via a C-terminal domain). Phosphorylated in vitro by MAPK8/JNK1 on Ser-724. In terms of tissue distribution, widely expressed. Most abundant in the brain.

The protein localises to the cytoplasm. It localises to the perinuclear region. Its subcellular location is the cell junction. It is found in the nucleus. Transcriptional corepressor. Corepressor of MTG8 transcriptional repression. Has some intrinsic repression activity which is independent of the number of the poly-Q repeats. Recruits NR2E1 to repress transcription. Promotes vascular smooth cell (VSMC) migration and orientation. The polypeptide is Atrophin-1 (Atn1) (Mus musculus (Mouse)).